Here is a 76-residue protein sequence, read N- to C-terminus: Sec-independent protein translocase protein TatA (76 aa).

The helical transmembrane segment at 1–21 (MGGISIWQLLIIVAIIVLLFG) threads the bilayer. A disordered region spans residues 43 to 76 (MADDKSQPQDASFEKVEAKEAASTEQKAKEKEQA).

The protein belongs to the TatA/E family. The Tat system comprises two distinct complexes: a TatABC complex, containing multiple copies of TatA, TatB and TatC subunits, and a separate TatA complex, containing only TatA subunits. Substrates initially bind to the TatABC complex, which probably triggers association of the separate TatA complex to form the active translocon.

It localises to the cell inner membrane. In terms of biological role, part of the twin-arginine translocation (Tat) system that transports large folded proteins containing a characteristic twin-arginine motif in their signal peptide across membranes. TatA could form the protein-conducting channel of the Tat system. The chain is Sec-independent protein translocase protein TatA from Actinobacillus pleuropneumoniae serotype 5b (strain L20).